We begin with the raw amino-acid sequence, 323 residues long: Serine acetyltransferase 2 (323 aa).

The disordered stretch occupies residues 302-323; sequence AQSNGPSLSAGDTEKGHTNSTS. Basic and acidic residues predominate over residues 313-323; that stretch reads DTEKGHTNSTS.

Belongs to the transferase hexapeptide repeat family. As to quaternary structure, homomultimer. In terms of tissue distribution, ubiquitously expressed at low levels. Localized in vascular tissues, particularly in phloem.

It is found in the cytoplasm. The enzyme catalyses L-serine + acetyl-CoA = O-acetyl-L-serine + CoA. It participates in amino-acid biosynthesis; L-cysteine biosynthesis; L-cysteine from L-serine: step 1/2. The protein is Serine acetyltransferase 2 of Arabidopsis thaliana (Mouse-ear cress).